A 23-amino-acid polypeptide reads, in one-letter code: Alyteserin-1c (23 aa).

Serine 23 carries the serine amide modification.

In terms of tissue distribution, expressed by the skin glands.

It localises to the secreted. It is found in the target cell membrane. In terms of biological role, antibacterial peptide with amphipathic alpha-helical structure that shows selective growth-inhibitory activity against Gram-negative bacteria but low hemolytic activity against human erythrocytes (LC(50)=145-220 uM). It is moderately active against the Gram-negative bacteria E.coli (MIC=25 uM), K.pneumoniae (MIC=50 uM), P.aeruginosa (MIC=25 uM), A.baumannii (MIC=6 uM), and is weaky active against the Gram-positive S.aureus (MIC=100-250 uM). This is Alyteserin-1c from Alytes obstetricans (Common midwife toad).